A 189-amino-acid chain; its full sequence is Small heat shock protein 21 (189 aa).

The disordered stretch occupies residues 26–53 (PPNFNPRKIAQGDNGKGQQVSRYGAGAG). Positions 77–183 (KYFVGFDDNV…HEKIVNIPIS (107 aa)) constitute a sHSP domain.

This sequence belongs to the small heat shock protein (HSP20) family.

Its function is as follows. Heat shock protein required for pathogenicity. Mediates thermotolerance and adaptation to oxidative stress and ethanol-induced stress. Required for invasive growth and filament formation under various filament inducing conditions. Plays a role in the capacity of damaging human-derived endothelial and oral epithelial cells during infection. Potentiates resistance to antifungal drugs, as well as resistance to killing by human neutrophils. Plays a major role in trehalose homeostasis in response to elevated temperatures. Regulates CEK1 activation by phosphorylation in response to elevated temperatures. The polypeptide is Small heat shock protein 21 (HSP21) (Candida albicans (strain SC5314 / ATCC MYA-2876) (Yeast)).